A 51-amino-acid polypeptide reads, in one-letter code: Insulin (51 aa).

Intrachain disulfides connect Cys-7/Cys-37, Cys-19/Cys-50, and Cys-36/Cys-41.

Belongs to the insulin family. Heterodimer of a B chain and an A chain linked by two disulfide bonds.

It localises to the secreted. Its function is as follows. Insulin decreases blood glucose concentration. It increases cell permeability to monosaccharides, amino acids and fatty acids. It accelerates glycolysis, the pentose phosphate cycle, and glycogen synthesis in liver. The protein is Insulin (INS) of Alligator mississippiensis (American alligator).